A 429-amino-acid chain; its full sequence is Chaperone SurA (429 aa).

The N-terminal stretch at M1–A18 is a signal peptide. 2 PpiC domains span residues N170–A271 and I281–A380.

Its subcellular location is the periplasm. It catalyses the reaction [protein]-peptidylproline (omega=180) = [protein]-peptidylproline (omega=0). Chaperone involved in the correct folding and assembly of outer membrane proteins. Recognizes specific patterns of aromatic residues and the orientation of their side chains, which are found more frequently in integral outer membrane proteins. May act in both early periplasmic and late outer membrane-associated steps of protein maturation. This is Chaperone SurA from Legionella pneumophila subsp. pneumophila (strain Philadelphia 1 / ATCC 33152 / DSM 7513).